A 149-amino-acid chain; its full sequence is Deoxyuridine 5'-triphosphate nucleotidohydrolase (149 aa).

Substrate is bound by residues 68 to 70, asparagine 81, and 85 to 87; these read RSG and LID.

Belongs to the dUTPase family. Requires Mg(2+) as cofactor.

The enzyme catalyses dUTP + H2O = dUMP + diphosphate + H(+). Its pathway is pyrimidine metabolism; dUMP biosynthesis; dUMP from dCTP (dUTP route): step 2/2. This enzyme is involved in nucleotide metabolism: it produces dUMP, the immediate precursor of thymidine nucleotides and it decreases the intracellular concentration of dUTP so that uracil cannot be incorporated into DNA. This is Deoxyuridine 5'-triphosphate nucleotidohydrolase from Nitrosospira multiformis (strain ATCC 25196 / NCIMB 11849 / C 71).